Consider the following 204-residue polypeptide: bMERB domain-containing protein 1 (204 aa).

The bMERB domain occupies 3–150 (LKQSLSTHLE…EQEEDKEMAD (148 aa)). Residues 162 to 187 (VTKSPASSRAEKKAEPPPSKPTVAKT) form a disordered region.

The polypeptide is bMERB domain-containing protein 1 (Homo sapiens (Human)).